We begin with the raw amino-acid sequence, 591 residues long: Protein NRT1/ PTR FAMILY 4.3 (591 aa).

A compositionally biased stretch (polar residues) spans 1–10 (MAEINKQSNK). The disordered stretch occupies residues 1–38 (MAEINKQSNKWEQEEVSNENNWELAEEESVDWRGRPSN). A run of 12 helical transmembrane segments spans residues 47 to 67 (AALFVLGLQAFEIMGIAAVGN), 85 to 105 (ANIVTNFVGTIFIFALLGGYL), 109 to 129 (FLGSFWTIIIFGFVELSGFIL), 157 to 177 (GFKAMIFFMALYLVALGSGCV), 204 to 224 (FNAAYFAFSMGELIALTLLVW), 233 to 253 (IGFGVSAAAMTMGIISLVSGT), 347 to 367 (LISLVPIFASTIVFNTILAQL), 395 to 415 (AIPYIMLIFLVPLYDSFLVPF), 429 to 449 (LTRIGIGLFLSTFSMVSAAML), 463 to 483 (ILSIFWITPQFLIFGISEMFT), 502 to 522 (FLMALTYCSYSFGFYFSSVLV), and 551 to 571 (LFYWLLAVLSLLNFLSYLFWS).

The protein belongs to the major facilitator superfamily. Proton-dependent oligopeptide transporter (POT/PTR) (TC 2.A.17) family. As to expression, expressed in flowers. Detected in roots and siliques.

Its subcellular location is the membrane. This is Protein NRT1/ PTR FAMILY 4.3 (NPF4.3) from Arabidopsis thaliana (Mouse-ear cress).